Here is a 498-residue protein sequence, read N- to C-terminus: Glutamate--tRNA ligase (498 aa).

A 'HIGH' region motif is present at residues 11–21 (PSPTGHLHIGN). Residues 261 to 265 (KLSKR) carry the 'KMSKS' region motif. ATP is bound at residue K264.

It belongs to the class-I aminoacyl-tRNA synthetase family. Glutamate--tRNA ligase type 1 subfamily. As to quaternary structure, monomer.

It is found in the cytoplasm. It carries out the reaction tRNA(Glu) + L-glutamate + ATP = L-glutamyl-tRNA(Glu) + AMP + diphosphate. Its function is as follows. Catalyzes the attachment of glutamate to tRNA(Glu) in a two-step reaction: glutamate is first activated by ATP to form Glu-AMP and then transferred to the acceptor end of tRNA(Glu). The protein is Glutamate--tRNA ligase of Oenococcus oeni (strain ATCC BAA-331 / PSU-1).